We begin with the raw amino-acid sequence, 138 residues long: Endonuclease V (138 aa).

The active-site Nucleophile; via amide nitrogen is the Thr-2. Glu-23 (proton acceptor) is an active-site residue.

As to quaternary structure, monomer.

It catalyses the reaction Cleaves the N-glycosidic bond between the 5'-pyrimidine residue in cyclobutadipyrimidine (in DNA) and the corresponding deoxy-D-ribose residue.. The enzyme catalyses 2'-deoxyribonucleotide-(2'-deoxyribose 5'-phosphate)-2'-deoxyribonucleotide-DNA = a 3'-end 2'-deoxyribonucleotide-(2,3-dehydro-2,3-deoxyribose 5'-phosphate)-DNA + a 5'-end 5'-phospho-2'-deoxyribonucleoside-DNA + H(+). Participates in the repair of UV-damaged DNA by excising pyrimidine dimers that are the major UV-lesions. DNA glycosylase activity hydrolyzes the glycosylic bond of the 5' pyrimidine of the dimer. This leaves apurinic/apyrimidic (AP) sites in the DNA. These AP sites are removed by the AP lyase activity which cleaves the intrapyrimidine phosphodiester bond. Catalysis proceeds via a protonated imine covalent intermediate between the alpha-amino group of the N-terminal threonine residue and the C1' of the deoxyribose sugar of the 5' pyrimidine at the dimer site. In Enterobacteria phage T4 (Bacteriophage T4), this protein is Endonuclease V.